We begin with the raw amino-acid sequence, 211 residues long: Ribosome maturation factor RimM (211 aa).

The 72-residue stretch at 111–182 (PDAWYDHQLV…TLVITPPLGL (72 aa)) folds into the PRC barrel domain. Residues 184-211 (EEIPDEQPTPSATSDAEPGSAPEGDDAR) form a disordered region.

Belongs to the RimM family. Binds ribosomal protein uS19.

It is found in the cytoplasm. In terms of biological role, an accessory protein needed during the final step in the assembly of 30S ribosomal subunit, possibly for assembly of the head region. Essential for efficient processing of 16S rRNA. May be needed both before and after RbfA during the maturation of 16S rRNA. It has affinity for free ribosomal 30S subunits but not for 70S ribosomes. This is Ribosome maturation factor RimM from Clavibacter sepedonicus (Clavibacter michiganensis subsp. sepedonicus).